The chain runs to 420 residues: Gamma-glutamyl phosphate reductase (420 aa).

The protein belongs to the gamma-glutamyl phosphate reductase family.

It is found in the cytoplasm. It catalyses the reaction L-glutamate 5-semialdehyde + phosphate + NADP(+) = L-glutamyl 5-phosphate + NADPH + H(+). The protein operates within amino-acid biosynthesis; L-proline biosynthesis; L-glutamate 5-semialdehyde from L-glutamate: step 2/2. Functionally, catalyzes the NADPH-dependent reduction of L-glutamate 5-phosphate into L-glutamate 5-semialdehyde and phosphate. The product spontaneously undergoes cyclization to form 1-pyrroline-5-carboxylate. The protein is Gamma-glutamyl phosphate reductase of Streptococcus gordonii (strain Challis / ATCC 35105 / BCRC 15272 / CH1 / DL1 / V288).